Here is a 101-residue protein sequence, read N- to C-terminus: NADH-quinone oxidoreductase subunit K (101 aa).

The next 3 membrane-spanning stretches (helical) occupy residues 5 to 25, 29 to 49, and 62 to 82; these read LGQV…GVLL, LIMI…VLVG, and VALL…ALVV.

Belongs to the complex I subunit 4L family. NDH-1 is composed of 14 different subunits. Subunits NuoA, H, J, K, L, M, N constitute the membrane sector of the complex.

The protein resides in the cell inner membrane. It carries out the reaction a quinone + NADH + 5 H(+)(in) = a quinol + NAD(+) + 4 H(+)(out). In terms of biological role, NDH-1 shuttles electrons from NADH, via FMN and iron-sulfur (Fe-S) centers, to quinones in the respiratory chain. The immediate electron acceptor for the enzyme in this species is believed to be ubiquinone. Couples the redox reaction to proton translocation (for every two electrons transferred, four hydrogen ions are translocated across the cytoplasmic membrane), and thus conserves the redox energy in a proton gradient. This is NADH-quinone oxidoreductase subunit K from Syntrophotalea carbinolica (strain DSM 2380 / NBRC 103641 / GraBd1) (Pelobacter carbinolicus).